We begin with the raw amino-acid sequence, 155 residues long: Ubiquinone biosynthesis protein COQ4 homolog, mitochondrial (155 aa).

It belongs to the COQ4 family. In terms of assembly, component of a multi-subunit COQ enzyme complex. Zn(2+) serves as cofactor.

The protein localises to the mitochondrion inner membrane. The catalysed reaction is a 4-hydroxy-3-methoxy-5-(all-trans-polyprenyl)benzoate + H(+) = a 2-methoxy-6-(all-trans-polyprenyl)phenol + CO2. It functions in the pathway cofactor biosynthesis; ubiquinone biosynthesis. Functionally, lyase that catalyzes the C1-decarboxylation of 4-hydroxy-3-methoxy-5-(all-trans-polyprenyl)benzoic acid into 2-methoxy-6-(all-trans-polyprenyl)phenol during ubiquinone biosynthesis. The protein is Ubiquinone biosynthesis protein COQ4 homolog, mitochondrial of Cryptosporidium hominis.